We begin with the raw amino-acid sequence, 320 residues long: MPNNVTVQELVDKVRLKVLQGEDYLQRKITTSDISRPALEFAGYFKHYPAARIQLLGITETSFAKDLTHEQREEYMTKMCMPQTPCFVISTNLPIPKELKKAAEDAKIPILGTHLTSSQILSNMTSYLLERLAPRKSLHGVLVDISGVGVLITGDSGVGKSETALELVRRGHRLIADDRVEVYARDEQTLVGTAPQILKHLMEIRGIGIIDVSTLYGTGAIMPSDQISLIVHLETWTPDVQFDRLGDRGDTQTIQGVIVPKVSVPVKTGRNLAIIIESAAMNYRAETMGYDATETFDRNLNQLIKQNSERDSKNNKGSAN.

Catalysis depends on residues His139 and Lys160. 154-161 contributes to the ATP binding site; the sequence is GDSGVGKS. Position 161 (Ser161) interacts with Mg(2+). Asp178 serves as the catalytic Proton acceptor; for phosphorylation activity. Proton donor; for dephosphorylation activity. Residues 202 to 211 form an important for the catalytic mechanism of both phosphorylation and dephosphorylation region; sequence MEIRGIGIID. Glu203 contributes to the Mg(2+) binding site. The active site involves Arg244. The segment at 265 to 270 is important for the catalytic mechanism of dephosphorylation; it reads PVKTGR.

The protein belongs to the HPrK/P family. As to quaternary structure, homohexamer. Mg(2+) is required as a cofactor.

The enzyme catalyses [HPr protein]-L-serine + ATP = [HPr protein]-O-phospho-L-serine + ADP + H(+). The catalysed reaction is [HPr protein]-O-phospho-L-serine + phosphate + H(+) = [HPr protein]-L-serine + diphosphate. Catalyzes the ATP- as well as the pyrophosphate-dependent phosphorylation of a specific serine residue in HPr, a phosphocarrier protein of the phosphoenolpyruvate-dependent sugar phosphotransferase system (PTS). HprK/P also catalyzes the pyrophosphate-producing, inorganic phosphate-dependent dephosphorylation (phosphorolysis) of seryl-phosphorylated HPr (P-Ser-HPr). The two antagonistic activities of HprK/P are regulated by several intracellular metabolites, which change their concentration in response to the absence or presence of rapidly metabolisable carbon sources (glucose, fructose, etc.) in the growth medium. Therefore, by controlling the phosphorylation state of HPr, HPrK/P is a sensor enzyme that plays a major role in the regulation of carbon metabolism and sugar transport: it mediates carbon catabolite repression (CCR), and regulates PTS-catalyzed carbohydrate uptake and inducer exclusion. The sequence is that of HPr kinase/phosphorylase from Limosilactobacillus reuteri (strain DSM 20016) (Lactobacillus reuteri).